A 294-amino-acid chain; its full sequence is N-acetylmuramic acid 6-phosphate etherase (294 aa).

The SIS domain maps to 56–219 (TSYSLKNGGR…STLSMVSVGK (164 aa)). The Proton donor role is filled by E84. Residue E115 is part of the active site.

It belongs to the GCKR-like family. MurNAc-6-P etherase subfamily. Homodimer.

It catalyses the reaction N-acetyl-D-muramate 6-phosphate + H2O = N-acetyl-D-glucosamine 6-phosphate + (R)-lactate. Its pathway is amino-sugar metabolism; 1,6-anhydro-N-acetylmuramate degradation. It functions in the pathway amino-sugar metabolism; N-acetylmuramate degradation. The protein operates within cell wall biogenesis; peptidoglycan recycling. Functionally, specifically catalyzes the cleavage of the D-lactyl ether substituent of MurNAc 6-phosphate, producing GlcNAc 6-phosphate and D-lactate. Together with AnmK, is also required for the utilization of anhydro-N-acetylmuramic acid (anhMurNAc) either imported from the medium or derived from its own cell wall murein, and thus plays a role in cell wall recycling. The chain is N-acetylmuramic acid 6-phosphate etherase from Francisella tularensis subsp. novicida (strain U112).